A 250-amino-acid chain; its full sequence is MSALLSPDQLEADLRAIGARLYHDQHPFHALLHHGKLDRGQVQAWALNRFEYQRCIPLKDAAILARMEDPALRRIWRQRIVDHDGNSATDGGIARWLHLTDALGLDRTLVESGRALLPGTRFAVQAYLQFVSEKSLLEAIASSLTELFAPNIIGQRVAGMLKHYDFVSSDALAYFEHRLTEAPRDSDFALDYVKQHADTVEKQALVKAALHFKCSVLWAQLDALHVAYVTPGIVWPDAFVPDRDASRVAA.

Belongs to the PqqC family.

The enzyme catalyses 6-(2-amino-2-carboxyethyl)-7,8-dioxo-1,2,3,4,7,8-hexahydroquinoline-2,4-dicarboxylate + 3 O2 = pyrroloquinoline quinone + 2 H2O2 + 2 H2O + H(+). Its pathway is cofactor biosynthesis; pyrroloquinoline quinone biosynthesis. Ring cyclization and eight-electron oxidation of 3a-(2-amino-2-carboxyethyl)-4,5-dioxo-4,5,6,7,8,9-hexahydroquinoline-7,9-dicarboxylic-acid to PQQ. In Xanthomonas oryzae pv. oryzae (strain KACC10331 / KXO85), this protein is Pyrroloquinoline-quinone synthase.